A 448-amino-acid chain; its full sequence is Homogentisate 1,2-dioxygenase (448 aa).

His303 serves as the catalytic Proton acceptor. Residues His346 and Glu352 each contribute to the Fe cation site. Tyr361 and His382 together coordinate homogentisate. His382 contacts Fe cation.

The protein belongs to the homogentisate dioxygenase family. In terms of assembly, hexamer; dimer of trimers. Fe cation is required as a cofactor.

The enzyme catalyses homogentisate + O2 = 4-maleylacetoacetate + H(+). Its pathway is amino-acid degradation; L-phenylalanine degradation; acetoacetate and fumarate from L-phenylalanine: step 4/6. Involved in the catabolism of homogentisate (2,5-dihydroxyphenylacetate or 2,5-OH-PhAc), a central intermediate in the degradation of phenylalanine and tyrosine. Catalyzes the oxidative ring cleavage of the aromatic ring of homogentisate to yield maleylacetoacetate. This chain is Homogentisate 1,2-dioxygenase, found in Rhodopseudomonas palustris (strain BisB18).